Here is a 732-residue protein sequence, read N- to C-terminus: Segment polarity protein dishevelled homolog DVL-2 (732 aa).

Residues 1-82 (MAETKVIYHL…RVVSWLVSSE (82 aa)) enclose the DIX domain. Disordered stretches follow at residues 81–181 (SETS…SSST) and 195–237 (EEDD…SSFS). Over residues 98–111 (DPPPVPPPVPPPPA) the composition is skewed to pro residues. The segment covering 146–157 (MRRDRVRRRDST) has biased composition (basic and acidic residues). A compositionally biased stretch (polar residues) spans 202–213 (RFSSSTEQSSAS). Over residues 215-227 (LLKRHRRRRKQRP) the composition is skewed to basic residues. Positions 250-335 (TVTLNMEKYN…KPGPIILTVA (86 aa)) constitute a PDZ domain. The DEP domain occupies 424–498 (PESGLEVRDR…SEQCYYIFGD (75 aa)). Low complexity-rich tracts occupy residues 570 to 589 (MGSA…SNRS), 612 to 629 (KSGS…SIRR), and 637 to 647 (PPSERSTSSRP). Residues 570 to 660 (MGSAGSQHSE…HPPSVHSYAA (91 aa)) are disordered.

It belongs to the DSH family. As to quaternary structure, can form homomultimers. Interacts with prickle1. Interacts (via the PDZ domain) with ccdc88c/dal and dact1-B/dpr. Interacts (via the DIX domain) with ARP/Axin-related protein and dact1-A/frodo. Interacts with sdc4, possibly via fz7. Interacts directly (via the DEP domain) with efnb1/ephrin-B1. May interact indirectly with the phosphorylated ephrin receptors ephb1 and ephb2 via SH domain-containing adapters. In terms of processing, phosphorylated. Phosphorylation is controlled by frizzled proteins, correlates with the onset of embryo dorsalizing events and is higher in the dorsal half of early cleavage embryos. Phosphorylated on tyrosine residues in response to association with efnb1/ephrin-B1.

It is found in the cytoplasm. It localises to the cytoplasmic vesicle. The protein resides in the cell projection. Its subcellular location is the cilium. The protein localises to the nucleus. It is found in the cell membrane. Its function is as follows. Involved in at least 2 independent signaling cascades, controlling cell fate via canonical Wnt signaling and cell polarity via a planar cell polarity (PCP) cascade. Acts synergistically with dal/dapple-like to activate Wnt signaling, stabilizing ctnnb1/beta-catenin and leading to dorsal axis formation. Also prevents degradation of ctnnb1/beta-catenin by displacing gsk3 from a complex with ARP/Axin-related protein. Has an additional role in anterior-posterior (A/P) axis formation, specifying different neuroectodermal cell fates along the A/P axis in a dose-dependent manner by activating several early patterning genes. In the PCP pathway, required at the cell membrane for PCP-mediated neural and mesodermal convergent extension during gastrulation and subsequent neural tube closure, acting to activate jnk. Also involved in blastopore closure and archenteron elongation during early, but not late, gastrulation. Associates with ephrin receptors and ligands and acts as part of a downstream PCP pathway to mediate ephrin-mediated cell repulsion via activation of rhoa. Required for efnb1/ephrin-B1-driven movement of non-retinal progenitor cells into the retina during eye field formation. Patterns the hindbrain. Required for ciliogenesis. Controls the docking of basal bodies to the apical plasma membrane; mediates the activation, but not localization of rhoa at the apical surface of ciliated cells during basal body docking. Furthermore, required for the association of basal bodies with membrane-bound vesicles and the vesicle-trafficking protein exoc4/sec8, and this association is in turn required for basal body docking. Once basal bodies are docked, required for the planar polarization of basal bodies that underlies ciliary beating and the directional fluid flow across ciliated epithelia. This Xenopus tropicalis (Western clawed frog) protein is Segment polarity protein dishevelled homolog DVL-2.